Consider the following 218-residue polypeptide: Probable WRKY transcription factor 12 (218 aa).

Positions 49–63 are enriched in low complexity; the sequence is SSLSSPSFPIHNSSS. 2 disordered regions span residues 49 to 120 and 199 to 218; these read SSLS…DMKN and HNHI…LSSF. The segment covering 64-77 has biased composition (polar residues); that stretch reads TTTTHAPLGFSNNL. Low complexity predominate over residues 105 to 116; that stretch reads SNSWWRSNSGSG. Residues 139-204 constitute a DNA-binding region (WRKY); the sequence is SDVDVLDDGY…YEGRHNHIPS (66 aa).

The protein belongs to the WRKY group II-c family.

Its subcellular location is the nucleus. Transcription factor. Interacts specifically with the W box (5'-(T)TGAC[CT]-3'), a frequently occurring elicitor-responsive cis-acting element. In Arabidopsis thaliana (Mouse-ear cress), this protein is Probable WRKY transcription factor 12 (WRKY12).